The chain runs to 207 residues: LexA repressor (207 aa).

The H-T-H motif DNA-binding region spans 28 to 48 (VREIGEAVGLASSSTVHGHLS). Catalysis depends on for autocatalytic cleavage activity residues Ser130 and Lys168.

It belongs to the peptidase S24 family. In terms of assembly, homodimer.

It carries out the reaction Hydrolysis of Ala-|-Gly bond in repressor LexA.. In terms of biological role, represses a number of genes involved in the response to DNA damage (SOS response), including recA and lexA. In the presence of single-stranded DNA, RecA interacts with LexA causing an autocatalytic cleavage which disrupts the DNA-binding part of LexA, leading to derepression of the SOS regulon and eventually DNA repair. The protein is LexA repressor of Staphylococcus aureus (strain Mu3 / ATCC 700698).